We begin with the raw amino-acid sequence, 419 residues long: Menaquinone reductase, integral membrane subunit (419 aa).

A run of 10 helical transmembrane segments spans residues Leu23–Ala43, Phe61–Phe81, Ile98–Val118, Val143–Leu163, Ala176–Ser196, Phe221–Val241, Ile270–Ala290, Leu316–Leu336, Val341–Met361, and Trp383–Ser403.

Belongs to the NrfD family. As to quaternary structure, the Qrc complex is composed of four subunits: QrcA, QrcB, QrcC and QrcD. Can form a supercomplex with the [NiFe] hydrogenase HynA1 and the tetraheme Type I cytochrome c3 TpIc(3), its physiological electron donors.

Its subcellular location is the cell inner membrane. In terms of biological role, component of the respiratory Qrc complex, that catalyzes the reduction of the menaquinone pool using electrons transferred from the reduced periplasmic cytochrome c3, and which is probably involved in sulfate respiration. Is likely essential for growth on H(2) or formate since the periplasmic hydrogenases and/or formate dehydrogenases act as primary electron donors for the Qrc complex. The QrcD subunit anchors the protein complex to the membrane and likely interacts with the quinone pool. The protein is Menaquinone reductase, integral membrane subunit of Nitratidesulfovibrio vulgaris (strain ATCC 29579 / DSM 644 / CCUG 34227 / NCIMB 8303 / VKM B-1760 / Hildenborough) (Desulfovibrio vulgaris).